Here is a 568-residue protein sequence, read N- to C-terminus: Sulfite reductase [NADPH] hemoprotein beta-component (568 aa).

Residues Cys-425, Cys-431, Cys-470, and Cys-474 each contribute to the [4Fe-4S] cluster site. A siroheme-binding site is contributed by Cys-474.

It belongs to the nitrite and sulfite reductase 4Fe-4S domain family. Alpha(8)-beta(8). The alpha component is a flavoprotein, the beta component is a hemoprotein. The cofactor is siroheme. Requires [4Fe-4S] cluster as cofactor.

The enzyme catalyses hydrogen sulfide + 3 NADP(+) + 3 H2O = sulfite + 3 NADPH + 4 H(+). It participates in sulfur metabolism; hydrogen sulfide biosynthesis; hydrogen sulfide from sulfite (NADPH route): step 1/1. Its function is as follows. Component of the sulfite reductase complex that catalyzes the 6-electron reduction of sulfite to sulfide. This is one of several activities required for the biosynthesis of L-cysteine from sulfate. The protein is Sulfite reductase [NADPH] hemoprotein beta-component of Xanthomonas campestris pv. campestris (strain B100).